Here is a 376-residue protein sequence, read N- to C-terminus: Growth/differentiation factor 8 (376 aa).

A signal peptide spans 1–22 (MHLSQIVLYLSLLIALGPVVLS). Residues 23–267 (DQEAHQQPSV…ISEGPRRARR (245 aa)) constitute a propeptide that is removed on maturation. Intrachain disulfides connect Cys273/Cys283, Cys282/Cys341, Cys310/Cys373, and Cys314/Cys375.

This sequence belongs to the TGF-beta family. In terms of assembly, homodimer; disulfide-linked. Highly expressed in muscle. Also expressed in other tissues such as eye, gill, ovary, gut and brain. Very low level detected in testis. Not expressed in liver, kidney, stomach or heart.

It localises to the secreted. Acts specifically as a negative regulator of skeletal muscle growth. This chain is Growth/differentiation factor 8, found in Oreochromis mossambicus (Mozambique tilapia).